The following is a 236-amino-acid chain: 2-C-methyl-D-erythritol 4-phosphate cytidylyltransferase (236 aa).

Belongs to the IspD/TarI cytidylyltransferase family. IspD subfamily.

The catalysed reaction is 2-C-methyl-D-erythritol 4-phosphate + CTP + H(+) = 4-CDP-2-C-methyl-D-erythritol + diphosphate. It functions in the pathway isoprenoid biosynthesis; isopentenyl diphosphate biosynthesis via DXP pathway; isopentenyl diphosphate from 1-deoxy-D-xylulose 5-phosphate: step 2/6. Functionally, catalyzes the formation of 4-diphosphocytidyl-2-C-methyl-D-erythritol from CTP and 2-C-methyl-D-erythritol 4-phosphate (MEP). The sequence is that of 2-C-methyl-D-erythritol 4-phosphate cytidylyltransferase from Burkholderia vietnamiensis (strain G4 / LMG 22486) (Burkholderia cepacia (strain R1808)).